Reading from the N-terminus, the 413-residue chain is Hibernation-specific plasma protein HP-55 (413 aa).

A signal peptide spans 1–24 (MPSSISWGLLLLAALSCLGPGSLA). Q25 carries the post-translational modification Pyrrolidone carboxylic acid. Residues N65, N102, N165, and N266 are each glycosylated (N-linked (GlcNAc...) asparagine). The RCL stretch occupies residues 368–387 (GGTVLGAEAMLQAPIMKFDR).

The protein belongs to the serpin family. Plasma proteins HP-20, HP-25, HP-27 and HP-55 form a 140 kDa complex via disulfide bonds in the plasma. The N-terminus is blocked. Plasma; synthesized in the liver.

It is found in the secreted. Functionally, protease inhibitor. This Tamias sibiricus (Siberian chipmunk) protein is Hibernation-specific plasma protein HP-55.